The following is a 257-amino-acid chain: Protein YIPF5 (257 aa).

Over 1-124 (MSGFDNLNSG…RASDGSIMNE (124 aa)) the chain is Cytoplasmic. An interaction with Sec23 region spans residues 75–106 (PPTPQTFYGDSFEEEPPLLEELGINFDHIWQK). The chain crosses the membrane as a helical span at residues 125 to 145 (TDLAGPVVFCLAFGATLLLAG). A topological domain (lumenal) is located at residue lysine 146. The chain crosses the membrane as a helical span at residues 147 to 167 (IQFGYVYGISAIGCLGMFCLL). Topologically, residues 168-173 (NLMSMT) are cytoplasmic. Residues 174 to 194 (GVSFGCVASVLGYCLLPMILL) form a helical membrane-spanning segment. Residues 195-196 (SS) are Lumenal-facing. Residues 197 to 217 (FAVVFSLQGMVGILLTATIIG) form a helical membrane-spanning segment. The Cytoplasmic segment spans residues 218-236 (WCSFSASKIFISALAMDGQ). Residues 237 to 257 (QLLVAYPCALLYGVFALISVF) traverse the membrane as a helical segment.

Belongs to the YIP1 family. In terms of assembly, interacts with the COPII coat components Sec23 (SEC23A and/or SEC23B) and Sec24 (SEC24A and/or SEC24B). Interacts with YIF1A. May interact with RAB1A. Interacts with YIPF3 and YIPF4.

It is found in the endoplasmic reticulum membrane. Its subcellular location is the golgi apparatus. The protein resides in the cis-Golgi network membrane. It localises to the cytoplasmic vesicle. The protein localises to the COPII-coated vesicle. Its function is as follows. Plays a role in transport between endoplasmic reticulum and Golgi. In pancreatic beta cells, required to transport proinsulin from endoplasmic reticulum into the Golgi. The polypeptide is Protein YIPF5 (Rattus norvegicus (Rat)).